The sequence spans 335 residues: UPF0284 protein TON_0688 (335 aa).

It belongs to the UPF0284 family.

The sequence is that of UPF0284 protein TON_0688 from Thermococcus onnurineus (strain NA1).